The primary structure comprises 371 residues: Cytochrome b (371 aa).

4 helical membrane-spanning segments follow: residues Phe-25 to Val-45, Trp-69 to Ile-90, Trp-105 to Leu-125, and Phe-170 to Leu-190. The heme b site is built by His-75 and His-89. Heme b contacts are provided by His-174 and His-188. His-193 contributes to the a ubiquinone binding site. The next 4 helical transmembrane spans lie at Met-218–Phe-238, Leu-280–His-300, Leu-312–Thr-332, and Phe-339–Pro-358.

The protein belongs to the cytochrome b family. The cytochrome bc1 complex contains 3 respiratory subunits (MT-CYB, CYC1 and UQCRFS1), 2 core proteins (UQCRC1 and UQCRC2) and probably 6 low-molecular weight proteins. Heme b serves as cofactor.

It is found in the mitochondrion inner membrane. Its function is as follows. Component of the ubiquinol-cytochrome c reductase complex (complex III or cytochrome b-c1 complex) that is part of the mitochondrial respiratory chain. The b-c1 complex mediates electron transfer from ubiquinol to cytochrome c. Contributes to the generation of a proton gradient across the mitochondrial membrane that is then used for ATP synthesis. The sequence is that of Cytochrome b (MT-CYB) from Boa constrictor (Boa).